The following is a 364-amino-acid chain: Spermidine/putrescine import ATP-binding protein PotA (364 aa).

The 231-residue stretch at 6–236 (IEIRQIYKSY…PANLHVAMFI (231 aa)) folds into the ABC transporter domain. Residue 38 to 45 (GPSGCGKT) coordinates ATP.

The protein belongs to the ABC transporter superfamily. Spermidine/putrescine importer (TC 3.A.1.11.1) family. As to quaternary structure, the complex is composed of two ATP-binding proteins (PotA), two transmembrane proteins (PotB and PotC) and a solute-binding protein (PotD).

It is found in the cell inner membrane. It carries out the reaction ATP + H2O + polyamine-[polyamine-binding protein]Side 1 = ADP + phosphate + polyamineSide 2 + [polyamine-binding protein]Side 1.. Its function is as follows. Part of the ABC transporter complex PotABCD involved in spermidine/putrescine import. Responsible for energy coupling to the transport system. This chain is Spermidine/putrescine import ATP-binding protein PotA, found in Legionella pneumophila (strain Paris).